A 332-amino-acid polypeptide reads, in one-letter code: tRNA-dihydrouridine synthase B (332 aa).

FMN is bound by residues 16–18 (PMA) and glutamine 70. Cysteine 100 serves as the catalytic Proton donor. FMN is bound by residues lysine 139, 200-202 (NGD), and 224-225 (GR).

The protein belongs to the Dus family. DusB subfamily. Requires FMN as cofactor.

The enzyme catalyses a 5,6-dihydrouridine in tRNA + NAD(+) = a uridine in tRNA + NADH + H(+). The catalysed reaction is a 5,6-dihydrouridine in tRNA + NADP(+) = a uridine in tRNA + NADPH + H(+). Its function is as follows. Catalyzes the synthesis of 5,6-dihydrouridine (D), a modified base found in the D-loop of most tRNAs, via the reduction of the C5-C6 double bond in target uridines. The protein is tRNA-dihydrouridine synthase B of Pasteurella multocida (strain Pm70).